Consider the following 261-residue polypeptide: Putative [LysW]-aminoadipate/[LysW]-glutamate kinase (261 aa).

Substrate contacts are provided by residues Gly-35–Gly-36, Arg-62, and Asn-162.

This sequence belongs to the acetylglutamate kinase family. LysZ subfamily.

The protein localises to the cytoplasm. It carries out the reaction [amino-group carrier protein]-C-terminal-N-(1,4-dicarboxybutan-1-yl)-L-glutamine + ATP = [amino-group carrier protein]-C-terminal-N-(1-carboxy-5-phosphooxy-5-oxopentan-1-yl)-L-glutamine + ADP. The catalysed reaction is [amino-group carrier protein]-C-terminal-gamma-(L-glutamyl)-L-glutamate + ATP = [amino-group carrier protein]-C-terminal-gamma-(5-phospho-L-glutamyl)-L-glutamate + ADP. Its pathway is amino-acid biosynthesis; L-lysine biosynthesis via AAA pathway; L-lysine from L-alpha-aminoadipate (Thermus route): step 2/5. It participates in amino-acid biosynthesis; L-arginine biosynthesis. In terms of biological role, involved in both the arginine and lysine biosynthetic pathways. Phosphorylates the LysW-bound precursors glutamate (for arginine biosynthesis), respectively alpha-aminoadipate (for lysine biosynthesis). The chain is Putative [LysW]-aminoadipate/[LysW]-glutamate kinase from Pyrobaculum islandicum (strain DSM 4184 / JCM 9189 / GEO3).